A 187-amino-acid polypeptide reads, in one-letter code: Cell division protein SepF (187 aa).

Positions 13-74 are disordered; sequence GLAEDDRYAE…PAPATTAQVT (62 aa). Over residues 16 to 65 the composition is skewed to basic and acidic residues; sequence EDDRYAEDTEPETTRPRVEAAREVRVESRHEARPEVRHEPRPEVSVERRP.

The protein belongs to the SepF family. In terms of assembly, homodimer. Interacts with FtsZ.

It localises to the cytoplasm. Its function is as follows. Cell division protein that is part of the divisome complex and is recruited early to the Z-ring. Probably stimulates Z-ring formation, perhaps through the cross-linking of FtsZ protofilaments. Its function overlaps with FtsA. In Kineococcus radiotolerans (strain ATCC BAA-149 / DSM 14245 / SRS30216), this protein is Cell division protein SepF.